The chain runs to 347 residues: Olfactory receptor 13C3 (347 aa).

Over 1–55 (MIVQLICTVCFLAVNTFHVRSSFDFLKADDMGEINQTLVSEFLLLGLSGYPKIEI) the chain is Extracellular. Asn35 carries N-linked (GlcNAc...) asparagine glycosylation. The chain crosses the membrane as a helical span at residues 56–76 (VYFALILVMYLVILIGNGVLI). At 77 to 84 (IASIFDSH) the chain is on the cytoplasmic side. A helical transmembrane segment spans residues 85–105 (FHTPMYFFLGNLSFLDICYTS). Residues 106 to 129 (SSVPSTLVSLISKKRNISFSGCAV) lie on the Extracellular side of the membrane. A disulfide bridge connects residues Cys127 and Cys219. A helical membrane pass occupies residues 130–150 (QMFFGFAMGSTECLLLGMMAF). Residues 151–169 (DRYVAICNPLRYPIILSKV) lie on the Cytoplasmic side of the membrane. A helical transmembrane segment spans residues 170–190 (AYVLMASVSWLSGGINSAVQT). Topologically, residues 191–227 (LLAMRLPFCGNNIINHFACEILAVLKLACADISLNII) are extracellular. Residues 228 to 247 (TMVISNMAFLVLPLMVIFFS) form a helical membrane-spanning segment. At 248–267 (YMFILYTILQMNSATGRRKA) the chain is on the cytoplasmic side. Residues 268-288 (FSTCSAHLTVVIIFYGTIFFM) form a helical membrane-spanning segment. Topologically, residues 289–307 (YAKPKSQDLIGEEKLQALD) are extracellular. Residues 308 to 328 (KLISLFYGVVTPMLNPILYSL) traverse the membrane as a helical segment. Residues 329-347 (RNKDVKAAVKYLLNKKPIH) lie on the Cytoplasmic side of the membrane.

Belongs to the G-protein coupled receptor 1 family.

The protein resides in the cell membrane. Odorant receptor. This chain is Olfactory receptor 13C3 (OR13C3), found in Homo sapiens (Human).